The chain runs to 435 residues: Adenylosuccinate synthetase (435 aa).

GTP-binding positions include 22-28 (GDEGKGK) and 50-52 (GHT). Residue D23 is the Proton acceptor of the active site. Mg(2+) contacts are provided by D23 and G50. IMP contacts are provided by residues 23–26 (DEGK), 48–51 (NAGH), T140, R154, Q235, T250, and R314. Residue H51 is the Proton donor of the active site. A substrate-binding site is contributed by 310–316 (ATTGRKR). Residues R316, 342 to 344 (KLD), and 424 to 426 (SVG) each bind GTP.

The protein belongs to the adenylosuccinate synthetase family. Homodimer. It depends on Mg(2+) as a cofactor.

The protein localises to the cytoplasm. It carries out the reaction IMP + L-aspartate + GTP = N(6)-(1,2-dicarboxyethyl)-AMP + GDP + phosphate + 2 H(+). It functions in the pathway purine metabolism; AMP biosynthesis via de novo pathway; AMP from IMP: step 1/2. Plays an important role in the de novo pathway of purine nucleotide biosynthesis. Catalyzes the first committed step in the biosynthesis of AMP from IMP. The sequence is that of Adenylosuccinate synthetase from Chlorobaculum tepidum (strain ATCC 49652 / DSM 12025 / NBRC 103806 / TLS) (Chlorobium tepidum).